An 87-amino-acid chain; its full sequence is Exodeoxyribonuclease 7 small subunit (87 aa).

It belongs to the XseB family. As to quaternary structure, heterooligomer composed of large and small subunits.

The protein resides in the cytoplasm. It carries out the reaction Exonucleolytic cleavage in either 5'- to 3'- or 3'- to 5'-direction to yield nucleoside 5'-phosphates.. Its function is as follows. Bidirectionally degrades single-stranded DNA into large acid-insoluble oligonucleotides, which are then degraded further into small acid-soluble oligonucleotides. This is Exodeoxyribonuclease 7 small subunit from Pelotomaculum thermopropionicum (strain DSM 13744 / JCM 10971 / SI).